The sequence spans 107 residues: Iron-binding protein IscA (107 aa).

Positions 35, 99, and 101 each coordinate Fe cation.

The protein belongs to the HesB/IscA family. Homodimer; may form tetramers and higher multimers. Fe cation serves as cofactor.

Functionally, is able to transfer iron-sulfur clusters to apo-ferredoxin. Multiple cycles of [2Fe2S] cluster formation and transfer are observed, suggesting that IscA acts catalytically. Recruits intracellular free iron so as to provide iron for the assembly of transient iron-sulfur cluster in IscU in the presence of IscS, L-cysteine and the thioredoxin reductase system TrxA/TrxB. In Proteus mirabilis (strain HI4320), this protein is Iron-binding protein IscA.